Here is a 325-residue protein sequence, read N- to C-terminus: 4-hydroxy-3-methylbut-2-enyl diphosphate reductase (325 aa).

Cysteine 13 contributes to the [4Fe-4S] cluster binding site. Positions 42 and 76 each coordinate (2E)-4-hydroxy-3-methylbut-2-enyl diphosphate. Residues histidine 42 and histidine 76 each contribute to the dimethylallyl diphosphate site. Histidine 42 and histidine 76 together coordinate isopentenyl diphosphate. Cysteine 98 provides a ligand contact to [4Fe-4S] cluster. Histidine 126 contacts (2E)-4-hydroxy-3-methylbut-2-enyl diphosphate. Histidine 126 is a dimethylallyl diphosphate binding site. Histidine 126 is a binding site for isopentenyl diphosphate. The active-site Proton donor is glutamate 128. Threonine 169 is a binding site for (2E)-4-hydroxy-3-methylbut-2-enyl diphosphate. Cysteine 230 is a binding site for [4Fe-4S] cluster. (2E)-4-hydroxy-3-methylbut-2-enyl diphosphate is bound by residues serine 258, serine 259, asparagine 260, and serine 306. Dimethylallyl diphosphate-binding residues include serine 258, serine 259, asparagine 260, and serine 306. Isopentenyl diphosphate-binding residues include serine 258, serine 259, asparagine 260, and serine 306.

It belongs to the IspH family. The cofactor is [4Fe-4S] cluster.

It catalyses the reaction isopentenyl diphosphate + 2 oxidized [2Fe-2S]-[ferredoxin] + H2O = (2E)-4-hydroxy-3-methylbut-2-enyl diphosphate + 2 reduced [2Fe-2S]-[ferredoxin] + 2 H(+). It carries out the reaction dimethylallyl diphosphate + 2 oxidized [2Fe-2S]-[ferredoxin] + H2O = (2E)-4-hydroxy-3-methylbut-2-enyl diphosphate + 2 reduced [2Fe-2S]-[ferredoxin] + 2 H(+). The protein operates within isoprenoid biosynthesis; dimethylallyl diphosphate biosynthesis; dimethylallyl diphosphate from (2E)-4-hydroxy-3-methylbutenyl diphosphate: step 1/1. It functions in the pathway isoprenoid biosynthesis; isopentenyl diphosphate biosynthesis via DXP pathway; isopentenyl diphosphate from 1-deoxy-D-xylulose 5-phosphate: step 6/6. Functionally, catalyzes the conversion of 1-hydroxy-2-methyl-2-(E)-butenyl 4-diphosphate (HMBPP) into a mixture of isopentenyl diphosphate (IPP) and dimethylallyl diphosphate (DMAPP). Acts in the terminal step of the DOXP/MEP pathway for isoprenoid precursor biosynthesis. This Prosthecochloris aestuarii (strain DSM 271 / SK 413) protein is 4-hydroxy-3-methylbut-2-enyl diphosphate reductase.